Consider the following 581-residue polypeptide: uncharacterized protein (581 aa).

This is an uncharacterized protein from Acanthamoeba polyphaga mimivirus (APMV).